Reading from the N-terminus, the 513-residue chain is tRNA-2-methylthio-N(6)-dimethylallyladenosine synthase (513 aa).

Residues Lys67 to Leu185 form the MTTase N-terminal domain. Residues Cys76, Cys112, Cys146, Cys222, Cys226, and Cys229 each coordinate [4Fe-4S] cluster. In terms of domain architecture, Radical SAM core spans Arg208 to Arg438. A TRAM domain is found at Gln441 to Ser504.

This sequence belongs to the methylthiotransferase family. MiaB subfamily. In terms of assembly, monomer. The cofactor is [4Fe-4S] cluster.

It localises to the cytoplasm. The catalysed reaction is N(6)-dimethylallyladenosine(37) in tRNA + (sulfur carrier)-SH + AH2 + 2 S-adenosyl-L-methionine = 2-methylsulfanyl-N(6)-dimethylallyladenosine(37) in tRNA + (sulfur carrier)-H + 5'-deoxyadenosine + L-methionine + A + S-adenosyl-L-homocysteine + 2 H(+). Its function is as follows. Catalyzes the methylthiolation of N6-(dimethylallyl)adenosine (i(6)A), leading to the formation of 2-methylthio-N6-(dimethylallyl)adenosine (ms(2)i(6)A) at position 37 in tRNAs that read codons beginning with uridine. The polypeptide is tRNA-2-methylthio-N(6)-dimethylallyladenosine synthase (Staphylococcus saprophyticus subsp. saprophyticus (strain ATCC 15305 / DSM 20229 / NCIMB 8711 / NCTC 7292 / S-41)).